A 1073-amino-acid polypeptide reads, in one-letter code: Carbamoyl phosphate synthase large chain (1073 aa).

Residues 1-403 form a carboxyphosphate synthetic domain region; sequence MPKRTDIKSI…SLQKALRGLE (403 aa). ATP contacts are provided by Arg-129, Arg-169, Gly-175, Gly-176, Glu-208, Leu-210, Glu-215, Gly-241, Val-242, His-243, Gln-285, and Glu-299. In terms of domain architecture, ATP-grasp 1 spans 133–328; it reads DKAMKDIGLE…IAKIAAKLAI (196 aa). 3 residues coordinate Mg(2+): Gln-285, Glu-299, and Asn-301. Mn(2+) is bound by residues Gln-285, Glu-299, and Asn-301. Residues 404 to 553 are oligomerization domain; the sequence is VGACGLDPKV…YSTYEEECEA (150 aa). Residues 554 to 935 are carbamoyl phosphate synthetic domain; that stretch reads NPSTRDKIMI…AFAKAQMGAS (382 aa). The ATP-grasp 2 domain occupies 678–869; it reads QQMVQRLSLL…LAMIAARVMA (192 aa). The ATP site is built by Arg-714, His-753, Leu-755, Glu-760, Gly-785, Val-786, His-787, Ser-788, Gln-828, and Glu-840. 3 residues coordinate Mg(2+): Gln-828, Glu-840, and Asn-842. Mn(2+) is bound by residues Gln-828, Glu-840, and Asn-842. One can recognise an MGS-like domain in the interval 936-1073; that stretch reads EVLPTGGTAF…LQDLHAGLKA (138 aa). The segment at 936–1073 is allosteric domain; the sequence is EVLPTGGTAF…LQDLHAGLKA (138 aa).

The protein belongs to the CarB family. Composed of two chains; the small (or glutamine) chain promotes the hydrolysis of glutamine to ammonia, which is used by the large (or ammonia) chain to synthesize carbamoyl phosphate. Tetramer of heterodimers (alpha,beta)4. Mg(2+) is required as a cofactor. Requires Mn(2+) as cofactor.

The enzyme catalyses hydrogencarbonate + L-glutamine + 2 ATP + H2O = carbamoyl phosphate + L-glutamate + 2 ADP + phosphate + 2 H(+). It catalyses the reaction hydrogencarbonate + NH4(+) + 2 ATP = carbamoyl phosphate + 2 ADP + phosphate + 2 H(+). It participates in amino-acid biosynthesis; L-arginine biosynthesis; carbamoyl phosphate from bicarbonate: step 1/1. It functions in the pathway pyrimidine metabolism; UMP biosynthesis via de novo pathway; (S)-dihydroorotate from bicarbonate: step 1/3. In terms of biological role, large subunit of the glutamine-dependent carbamoyl phosphate synthetase (CPSase). CPSase catalyzes the formation of carbamoyl phosphate from the ammonia moiety of glutamine, carbonate, and phosphate donated by ATP, constituting the first step of 2 biosynthetic pathways, one leading to arginine and/or urea and the other to pyrimidine nucleotides. The large subunit (synthetase) binds the substrates ammonia (free or transferred from glutamine from the small subunit), hydrogencarbonate and ATP and carries out an ATP-coupled ligase reaction, activating hydrogencarbonate by forming carboxy phosphate which reacts with ammonia to form carbamoyl phosphate. This Pseudomonas putida (strain ATCC 47054 / DSM 6125 / CFBP 8728 / NCIMB 11950 / KT2440) protein is Carbamoyl phosphate synthase large chain.